The primary structure comprises 383 residues: Protein delta homolog 1 (383 aa).

A signal peptide spans 1–23 (MTATEALLRVLLLLLAFGHSTYG). EGF-like domains follow at residues 24–55 (AECF…PLCD), 53–86 (LCDQ…ELCD), 88–125 (DVRA…KDCQ), 127–168 (KDGP…NFCE), 170–206 (VANS…KTCS), and 208–245 (PVTN…LTCV). The Extracellular portion of the chain corresponds to 24–303 (AECFPACNPQ…KKTPLLTEGQ (280 aa)). Disulfide bonds link Cys-26–Cys-37, Cys-30–Cys-43, Cys-45–Cys-54, Cys-57–Cys-68, Cys-63–Cys-74, Cys-76–Cys-85, Cys-92–Cys-103, Cys-97–Cys-113, Cys-115–Cys-124, Cys-131–Cys-144, Cys-138–Cys-156, and Cys-158–Cys-167. Residue Ser-94 is glycosylated (O-linked (GalNAc...) serine). An N-linked (GlcNAc...) asparagine glycan is attached at Asn-100. A glycan (O-linked (GalNAc...) threonine) is linked at Thr-143. O-linked (GalNAc...) serine; partial glycosylation is present at Ser-163. N-linked (GlcNAc...) asparagine; atypical; partial glycans are attached at residues Asn-165 and Asn-172. 6 cysteine pairs are disulfide-bonded: Cys-174-Cys-185, Cys-179-Cys-194, Cys-196-Cys-205, Cys-212-Cys-223, Cys-217-Cys-233, and Cys-235-Cys-244. O-linked (GalNAc...) serine glycosylation is present at Ser-214. The O-linked (GalNAc...) threonine; partial glycan is linked to Thr-222. Ser-251 is a glycosylation site (O-linked (GalNAc...) serine; partial). O-linked (GalNAc...) threonine glycosylation is present at Thr-256. Residue Ser-260 is glycosylated (O-linked (GalNAc...) serine; partial). Residues 304 to 327 (AICFTILGVLTSLVVLGTVGIVFL) form a helical membrane-spanning segment. The Cytoplasmic portion of the chain corresponds to 328-383 (NKCETWVSNLRYNHMLRKKKNLLLQYNSGEDLAVNIIFPEKIDMTTFSKEAGDEEI).

Monomer. Interacts with SH3RF2. In terms of processing, N- and O-glycosylated. O-glycosylated with core 1 or possibly core 8 glycans. Found within the stromal cells in close contact to the vascular structure of placental villi, yolk sac, fetal liver, adrenal cortex and pancreas and in the beta cells of the islets of Langerhans in the adult pancreas. Found also in some forms of neuroendocrine lung tumor tissue.

It is found in the membrane. Its subcellular location is the cytoplasm. Functionally, may have a role in neuroendocrine differentiation. The sequence is that of Protein delta homolog 1 (DLK1) from Homo sapiens (Human).